The primary structure comprises 257 residues: MSVPLILTLLAGAATFIGAFLGVLGQKPSNRVLAFSLGFAAGIMLLISLMEMLPAALDTEGMSPVLGYGMFIIGLLGYFGLDRLLPHAHPQDLVQKRQQPLPGSIKRTAILLTLGISLHNFPEGIATFVTASSNLELGFGIALAVALHNIPEGLAVAGPVYAATGSKRTAIFWAGISGMAEILGGVLAWLILGSLVSPIVMAAIMAAVAGIMVALSVDELMPLAKEIDPNNNPSYGVLCGMSIMGLSLVILQTIGIG.

The next 8 membrane-spanning stretches (helical) occupy residues 5–25, 32–52, 61–81, 109–129, 137–157, 171–191, 195–215, and 236–256; these read LILT…GVLG, VLAF…LMEM, GMSP…YFGL, AILL…ATFV, LGFG…LAVA, IFWA…AWLI, LVSP…MVAL, and GVLC…TIGI. Residues N120 and E123 each contribute to the Fe(2+) site. The Zn(2+) site is built by E123 and H148. N149, E152, and E181 together coordinate Fe(2+). E152 contacts Zn(2+).

The protein belongs to the ZIP transporter (TC 2.A.5) family. ZupT subfamily.

It is found in the cell inner membrane. The catalysed reaction is Zn(2+)(in) = Zn(2+)(out). Mediates zinc uptake. May also transport other divalent cations. This chain is Zinc transporter ZupT, found in Salmonella agona (strain SL483).